We begin with the raw amino-acid sequence, 206 residues long: MTKRTSAKHKIDRRMGENIWGRPKSPVNRREYGPGQHGQRRKGKISDFGIQLRAKQKLKGYYGDLTEKQFRRIYAEAERVKGDTGENLIGLLERRLDAVVYRAKFVATVFAARQFVNHKHVRVNGKIVNIPSYRVKEGDVIEVRDRSKQMVALIEATQLAERDVPDYIEADHSKMQATFVRTPALGDVPYPVMMEPNLVVEFYAKN.

Positions 18–46 are disordered; the sequence is NIWGRPKSPVNRREYGPGQHGQRRKGKIS. Positions 94 to 154 constitute an S4 RNA-binding domain; it reads RRLDAVVYRA…DRSKQMVALI (61 aa).

This sequence belongs to the universal ribosomal protein uS4 family. Part of the 30S ribosomal subunit. Contacts protein S5. The interaction surface between S4 and S5 is involved in control of translational fidelity.

Its function is as follows. One of the primary rRNA binding proteins, it binds directly to 16S rRNA where it nucleates assembly of the body of the 30S subunit. In terms of biological role, with S5 and S12 plays an important role in translational accuracy. In Roseobacter denitrificans (strain ATCC 33942 / OCh 114) (Erythrobacter sp. (strain OCh 114)), this protein is Small ribosomal subunit protein uS4.